We begin with the raw amino-acid sequence, 156 residues long: Ribosomal RNA large subunit methyltransferase H (156 aa).

Residues Gly-104 and 123 to 128 (LSAMTL) each bind S-adenosyl-L-methionine.

This sequence belongs to the RNA methyltransferase RlmH family. As to quaternary structure, homodimer.

It localises to the cytoplasm. The enzyme catalyses pseudouridine(1915) in 23S rRNA + S-adenosyl-L-methionine = N(3)-methylpseudouridine(1915) in 23S rRNA + S-adenosyl-L-homocysteine + H(+). Specifically methylates the pseudouridine at position 1915 (m3Psi1915) in 23S rRNA. This Chromobacterium violaceum (strain ATCC 12472 / DSM 30191 / JCM 1249 / CCUG 213 / NBRC 12614 / NCIMB 9131 / NCTC 9757 / MK) protein is Ribosomal RNA large subunit methyltransferase H.